We begin with the raw amino-acid sequence, 661 residues long: WD repeat-containing protein 26 (661 aa).

Gly residues predominate over residues 1-27 (MQANGAGGGGGGGGGGGGGGGGGGGQG). 2 disordered regions span residues 1 to 70 (MQAN…ASNN) and 99 to 118 (TAAS…KKKK). Low complexity-rich tracts occupy residues 56 to 70 (ANGL…ASNN) and 99 to 113 (TAAS…LGSS). Residues Ser121 and Ser123 each carry the phosphoserine modification. The region spanning 123–155 (SDEDVIRLIGQHLNGLGLNQTVDLLMQESGCRL) is the LisH domain. A CTLH domain is found at 156–231 (EHPSATKFRN…EYLEDGKVLE (76 aa)). 6 WD repeats span residues 353–392 (EHCN…HLLK), 399–438 (GHAY…GELR), 444–484 (SHED…DSWE), 524–563 (QEDH…LVRK), 566–608 (GVTQ…PIAE), and 611–651 (GHTR…DHQN).

In terms of assembly, forms homooligomers. Identified in the CTLH complex that contains GID4, RANBP9 and/or RANBP10, MKLN1, MAEA, RMND5A (or alternatively its paralog RMND5B), GID8, ARMC8, WDR26 and YPEL5. Within this complex, MAEA, RMND5A (or alternatively its paralog RMND5B), GID8, WDR26, and RANBP9 and/or RANBP10 form the catalytic core, while GID4, MKLN1, ARMC8 and YPEL5 have ancillary roles. Interacts with DDB1-CUL4A/B E3 ligase complexes. Forms a complex composed of at least WDR26, a G-beta:gamma unit, and PLCB2. Interacts with AXIN1. As to expression, broadly expressed, with highest levels in heart and skeletal muscle.

Its subcellular location is the cytoplasm. It localises to the nucleus. The protein localises to the mitochondrion. In terms of biological role, G-beta-like protein involved in cell signal transduction. Acts as a negative regulator in MAPK signaling pathway. Functions as a scaffolding protein to promote G beta:gamma-mediated PLCB2 plasma membrane translocation and subsequent activation in leukocytes. Core component of the CTLH E3 ubiquitin-protein ligase complex that selectively accepts ubiquitin from UBE2H and mediates ubiquitination and subsequent proteasomal degradation of the transcription factor HBP1. Acts as a negative regulator of the canonical Wnt signaling pathway through preventing ubiquitination of beta-catenin CTNNB1 by the beta-catenin destruction complex, thus negatively regulating CTNNB1 degradation. Serves as a scaffold to coordinate PI3K/AKT pathway-driven cell growth and migration. Protects cells from oxidative stress-induced apoptosis via the down-regulation of AP-1 transcriptional activity as well as by inhibiting cytochrome c release from mitochondria. Also protects cells by promoting hypoxia-mediated autophagy and mitophagy. This Homo sapiens (Human) protein is WD repeat-containing protein 26 (WDR26).